The following is a 262-amino-acid chain: MIDKSAFIHPTAIVEDGAVIGANAHIGPFCIVGPQVEIGEGTVLKSHVVVNGQTKIGRDNEIYQFASIGEVNQDLKYAGEPTRVEIGDRNRIRESVTIHRGTVQGGGLTKVGSDNLLMINAHVAHDCTVGNRCILANNATLAGHVSVDDFAIIGGMTAVHQFCIIGAHVMVGGCSGVAQDVPPYVIAQGNHATPFGVNIEGLKRRGFSREGLVAIRNAYKLLYRSGKTLDEAKLEIAELAEKHPEVKAFTEFFERSTRGPIR.

The protein belongs to the transferase hexapeptide repeat family. LpxA subfamily. In terms of assembly, homotrimer.

It is found in the cytoplasm. The catalysed reaction is a (3R)-hydroxyacyl-[ACP] + UDP-N-acetyl-alpha-D-glucosamine = a UDP-3-O-[(3R)-3-hydroxyacyl]-N-acetyl-alpha-D-glucosamine + holo-[ACP]. The protein operates within glycolipid biosynthesis; lipid IV(A) biosynthesis; lipid IV(A) from (3R)-3-hydroxytetradecanoyl-[acyl-carrier-protein] and UDP-N-acetyl-alpha-D-glucosamine: step 1/6. Involved in the biosynthesis of lipid A, a phosphorylated glycolipid that anchors the lipopolysaccharide to the outer membrane of the cell. This is Acyl-[acyl-carrier-protein]--UDP-N-acetylglucosamine O-acyltransferase from Salmonella paratyphi B (strain ATCC BAA-1250 / SPB7).